The following is a 38-amino-acid chain: MKVRASVKKLCRNCKIVKRNGVVRVICSAEPKHKQRQG.

This sequence belongs to the bacterial ribosomal protein bL36 family.

The protein is Large ribosomal subunit protein bL36A of Pectobacterium atrosepticum (strain SCRI 1043 / ATCC BAA-672) (Erwinia carotovora subsp. atroseptica).